A 97-amino-acid polypeptide reads, in one-letter code: YcgL domain-containing protein PMI1171 (97 aa).

Positions 3-87 (MICAIYRSTK…PVESMLNAYL (85 aa)) constitute a YcgL domain.

The polypeptide is YcgL domain-containing protein PMI1171 (Proteus mirabilis (strain HI4320)).